Here is a 467-residue protein sequence, read N- to C-terminus: Methylenetetrahydrofolate--tRNA-(uracil-5-)-methyltransferase TrmFO (467 aa).

11–16 (GAGLAG) serves as a coordination point for FAD.

The protein belongs to the MnmG family. TrmFO subfamily. FAD is required as a cofactor.

The protein localises to the cytoplasm. It carries out the reaction uridine(54) in tRNA + (6R)-5,10-methylene-5,6,7,8-tetrahydrofolate + NADH + H(+) = 5-methyluridine(54) in tRNA + (6S)-5,6,7,8-tetrahydrofolate + NAD(+). It catalyses the reaction uridine(54) in tRNA + (6R)-5,10-methylene-5,6,7,8-tetrahydrofolate + NADPH + H(+) = 5-methyluridine(54) in tRNA + (6S)-5,6,7,8-tetrahydrofolate + NADP(+). Its function is as follows. Catalyzes the folate-dependent formation of 5-methyl-uridine at position 54 (M-5-U54) in all tRNAs. This Prochlorococcus marinus (strain NATL2A) protein is Methylenetetrahydrofolate--tRNA-(uracil-5-)-methyltransferase TrmFO.